A 380-amino-acid chain; its full sequence is Magnesium-protoporphyrin IX monomethyl ester [oxidative] cyclase 1 (380 aa).

Belongs to the AcsF family. Fe cation is required as a cofactor.

The catalysed reaction is Mg-protoporphyrin IX 13-monomethyl ester + 3 NADPH + 3 O2 + 2 H(+) = 3,8-divinyl protochlorophyllide a + 3 NADP(+) + 5 H2O. Its pathway is porphyrin-containing compound metabolism; chlorophyll biosynthesis (light-independent). In terms of biological role, catalyzes the formation of the isocyclic ring in chlorophyll biosynthesis. Mediates the cyclase reaction, which results in the formation of divinylprotochlorophyllide (Pchlide) characteristic of all chlorophylls from magnesium-protoporphyrin IX 13-monomethyl ester (MgPMME). In Thermosynechococcus vestitus (strain NIES-2133 / IAM M-273 / BP-1), this protein is Magnesium-protoporphyrin IX monomethyl ester [oxidative] cyclase 1.